Here is a 409-residue protein sequence, read N- to C-terminus: O-methyltransferase pyiA (409 aa).

Residues 1–21 show a composition bias toward polar residues; that stretch reads MASQDGTTELLSQSVNSTCIP. Residues 1-46 form a disordered region; that stretch reads MASQDGTTELLSQSVNSTCIPGSTYHVDRGRASSASTPPTSPPLSE. Position 271 (D271) interacts with S-adenosyl-L-methionine. The active-site Proton acceptor is the H317.

It belongs to the class I-like SAM-binding methyltransferase superfamily. Cation-independent O-methyltransferase family.

It functions in the pathway mycotoxin biosynthesis. O-methyltransferase; part of the gene cluster that mediates the biosynthesis of the mycotoxin pyrichalasin H, a tyrosine-derived cytochalasan that inhibits the growth of rice seedlings, but also inhibits lymphocyte capping and actin polymerization and alters cell morphology. Pyrichalasin H is indicated as the responsible agent for the genus-specific pathogenicity of M.grisea toward crabgrass. The first step in the pathway is catalyzed by the O-methyltransferase pyiA which methylates free tyrosine to generate the precursor O-methyltyrosine. The hybrid PKS-NRPS pyiS, assisted by the enoyl reductase pyiC, are responsible for fusion of the O-methyltyrosine precursor and the polyketide backbone. The polyketide synthase module (PKS) of pyiS is responsible for the synthesis of the polyketide backbone and the downstream nonribosomal peptide synthetase (NRPS) amidates the carboxyl end of the polyketide with the O-methyltyrosine precursor. As the NRPS A-domain demonstrates substrate tolerance, pyiS can also use phenylalanine, tyrosine and even para-chlorophenylalanine as amino acid precursor, which leads to the production of novel cytochalasans, including halogenated cytochalasans. Because pyiS lacks a designated enoylreductase (ER) domain, the required activity is provided the enoyl reductase pyiC. Reduction by the hydrolyase pyiE leads to 1,5-dihydropyrrolone, which is substrate for dehydration and intra-molecular Diels-Alder cyclization by the Diels-Alderase pyiF to yield the required isoindolone-fused macrocycle. The tailoring cytochrome P450 monooxygenases piyD and piyG catalyze the hydroxylation at C-18 and C-7, respectivily, whereas the short-chain dehydrogenase/reductase pyiH reduces the carbonyl at C-21 in preparation for the transfer of an acetyl group by the acetyltransferase pyiB. These 3 reactions whose order is not clear yet, lead to the production of O-methylpyrichalasin J, a deacetylated pyrichalasin H. Finally, pyiB to converts O-methylpyrichalasin J into the final product pyrichalasin H via acetylation of C-21. The chain is O-methyltransferase pyiA from Pyricularia grisea (Crabgrass-specific blast fungus).